The following is a 362-amino-acid chain: MSLQSIKYTRGSLEILDQLLLPVQSKYLPVRGVEDGWKVINKMQVRGAPAIAIVGCLSLAVEIHPEEFDSKKSLRQELEGKLNYLVSARPTAVNMKMAADELLSLANDLTKDDNVDVAAMKQRFLNATEAMLKKDIADNRAIGAHGAKAILQLVAAAAGAPMAGPVRVLTHCNTGSLATAGYGTALGVVRQLSELGKLEHVYCTETRPYNQGARLTAYELVHEKFPATLVLDSMVAALLRAKNVAAVVVGADRVAANGDTANKIGTYQIAVVAKHHGVPFFVAAPLTSIDLHIPSGDHIIIEERPDREMTHVGEHRIAAPGINCWNPAFDVTPASLITGIITERGVFQPAQLKETITKLLET.

Aspartate 252 acts as the Proton donor in catalysis.

Belongs to the eIF-2B alpha/beta/delta subunits family. MtnA subfamily.

Its subcellular location is the cytoplasm. It localises to the nucleus. The enzyme catalyses 5-(methylsulfanyl)-alpha-D-ribose 1-phosphate = 5-(methylsulfanyl)-D-ribulose 1-phosphate. The protein operates within amino-acid biosynthesis; L-methionine biosynthesis via salvage pathway; L-methionine from S-methyl-5-thio-alpha-D-ribose 1-phosphate: step 1/6. Its function is as follows. Catalyzes the interconversion of methylthioribose-1-phosphate (MTR-1-P) into methylthioribulose-1-phosphate (MTRu-1-P). This chain is Methylthioribose-1-phosphate isomerase, found in Drosophila pseudoobscura pseudoobscura (Fruit fly).